The primary structure comprises 505 residues: ATP synthase subunit beta (505 aa).

G158–T165 provides a ligand contact to ATP.

The protein belongs to the ATPase alpha/beta chains family. In terms of assembly, F-type ATPases have 2 components, CF(1) - the catalytic core - and CF(0) - the membrane proton channel. CF(1) has five subunits: alpha(3), beta(3), gamma(1), delta(1), epsilon(1). CF(0) has three main subunits: a(1), b(2) and c(9-12). The alpha and beta chains form an alternating ring which encloses part of the gamma chain. CF(1) is attached to CF(0) by a central stalk formed by the gamma and epsilon chains, while a peripheral stalk is formed by the delta and b chains.

The protein resides in the cell inner membrane. The catalysed reaction is ATP + H2O + 4 H(+)(in) = ADP + phosphate + 5 H(+)(out). Functionally, produces ATP from ADP in the presence of a proton gradient across the membrane. The catalytic sites are hosted primarily by the beta subunits. The sequence is that of ATP synthase subunit beta from Parabacteroides distasonis (strain ATCC 8503 / DSM 20701 / CIP 104284 / JCM 5825 / NCTC 11152).